We begin with the raw amino-acid sequence, 435 residues long: Adenylosuccinate synthetase (435 aa).

GTP contacts are provided by residues 12–18 (GDEGKGK) and 40–42 (GHT). The active-site Proton acceptor is the Asp13. 2 residues coordinate Mg(2+): Asp13 and Gly40. IMP contacts are provided by residues 13–16 (DEGK), 38–41 (NAGH), Thr130, Arg144, Gln224, Thr239, and Arg301. The active-site Proton donor is His41. 297-303 (TVSNRKR) is a binding site for substrate. GTP is bound by residues Arg303, 329–331 (KLD), and 411–413 (SAG).

This sequence belongs to the adenylosuccinate synthetase family. Homodimer. Requires Mg(2+) as cofactor.

It is found in the cytoplasm. The enzyme catalyses IMP + L-aspartate + GTP = N(6)-(1,2-dicarboxyethyl)-AMP + GDP + phosphate + 2 H(+). Its pathway is purine metabolism; AMP biosynthesis via de novo pathway; AMP from IMP: step 1/2. Functionally, plays an important role in the de novo pathway of purine nucleotide biosynthesis. Catalyzes the first committed step in the biosynthesis of AMP from IMP. This is Adenylosuccinate synthetase from Wolbachia sp. subsp. Brugia malayi (strain TRS).